A 607-amino-acid chain; its full sequence is Hemagglutinin glycoprotein (607 aa).

The Intravirion segment spans residues 1 to 37 (MLSYQDKVGAFYKDNARANSSRLSLVTEDQGGRRPPY). A helical membrane pass occupies residues 38–58 (LLFVLLILLVGIMALLAITGV). The Virion surface portion of the chain corresponds to 59–607 (RFHQVSTSNM…IRFSCNRSKP (549 aa)). N-linked (GlcNAc...) asparagine; by host glycosylation is found at Asn149, Asn309, Asn391, Asn422, Asn456, Asn587, and Asn603.

The protein belongs to the paramyxoviruses hemagglutinin-neuraminidase family. Non-sialidase subfamily. As to quaternary structure, binds canine SLAMF1 at the cell surface.

Its subcellular location is the virion membrane. The protein resides in the host cell membrane. Functionally, attaches the virus to cell receptors and thereby initiating infection. Binding of H protein to the receptor induces a conformational change that allows the F protein to trigger virion/cell membranes fusion. The cellular receptor might be SLAM, and may explain the lymphotropism of the virus. The chain is Hemagglutinin glycoprotein (H) from Canine distemper virus (strain A92-27/4) (CDV).